The primary structure comprises 574 residues: Interleukin-1 receptor-like 2 (574 aa).

The first 21 residues, 1–21, serve as a signal peptide directing secretion; that stretch reads MGVTSLLFCGVFFLLLLFVAA. The Extracellular segment spans residues 22 to 338; the sequence is DTCEDIFMHN…ILIYPVPDFR (317 aa). Ig-like C2-type domains lie at 25 to 113, 132 to 215, and 225 to 321; these read EDIF…VNLT, PDVY…IRNY, and YGRR…TCHA. N-linked (GlcNAc...) asparagine glycosylation is found at N43, N55, and N111. C44 and C97 are oxidised to a cystine. An intrachain disulfide couples C149 to C199. Residues N231, N237, N253, N269, N290, and N302 are each glycosylated (N-linked (GlcNAc...) asparagine). C252 and C319 are joined by a disulfide. The chain crosses the membrane as a helical span at residues 339 to 359; it reads AYLLGGLMAFLLLVVSVLFIY. The Cytoplasmic portion of the chain corresponds to 360 to 574; the sequence is NSFKIDIMLW…CNAATGLITP (215 aa). A TIR domain is found at 384–539; that stretch reads KLYDAYVLYP…KFWKKVRYHM (156 aa). E470 is a catalytic residue.

This sequence belongs to the interleukin-1 receptor family. In terms of assembly, interacts with IL1RAP; the association is enhanced by IL36B indicative for an functional signaling complex and inhibited by IL36RN. Expressed in bone marrow-derived dendritic cells, splenic CD4(+) T-cells, bone marrow-derived macrophages and bone marrow-derived neutrophils.

It is found in the membrane. It catalyses the reaction NAD(+) + H2O = ADP-D-ribose + nicotinamide + H(+). Functionally, receptor for interleukin-36 (IL36A, IL36B and IL36G). After binding to interleukin-36 associates with the coreceptor IL1RAP to form the interleukin-36 receptor complex which mediates interleukin-36-dependent activation of NF-kappa-B, MAPK and other pathways. The IL-36 signaling system is thought to be present in epithelial barriers and to take part in local inflammatory response; it is similar to the IL-1 system. Seems to be involved in skin inflammatory response by induction of the IL-23/IL-17/IL-22 pathway. This is Interleukin-1 receptor-like 2 (Il1rl2) from Mus musculus (Mouse).